We begin with the raw amino-acid sequence, 312 residues long: Protein phosphatase 2A catalytic subunit B (312 aa).

Mn(2+) is bound by residues D55, H57, D83, and N115. H116 serves as the catalytic Proton donor. Residues H165 and H240 each contribute to the Mn(2+) site.

It belongs to the PPP phosphatase family. PP-2A subfamily. Component of the Sca1 complex composed of at least gefA, gefH, scaA, phr, and the protein phosphatase 2A subunits pppA and pho2B. Requires Mn(2+) as cofactor.

The protein resides in the cell membrane. The catalysed reaction is O-phospho-L-seryl-[protein] + H2O = L-seryl-[protein] + phosphate. It carries out the reaction O-phospho-L-threonyl-[protein] + H2O = L-threonyl-[protein] + phosphate. Component of the Sca1 complex, a regulator of cell motility, chemotaxis and signal relay. The Sca1 complex is recruited to the plasma membrane in a chemoattractant- and F-actin-dependent manner and is enriched at the leading edge of chemotaxing cells where it regulates F-actin dynamics and signal relay by controlling the activation of rasC and the downstream target of rapamycin complex 2 (TORC2)-Akt/protein kinase B (PKB) pathway. In Dictyostelium discoideum (Social amoeba), this protein is Protein phosphatase 2A catalytic subunit B.